Here is a 311-residue protein sequence, read N- to C-terminus: Porphobilinogen deaminase (311 aa).

C242 is subject to S-(dipyrrolylmethanemethyl)cysteine.

It belongs to the HMBS family. In terms of assembly, monomer. Dipyrromethane serves as cofactor.

It catalyses the reaction 4 porphobilinogen + H2O = hydroxymethylbilane + 4 NH4(+). Its pathway is porphyrin-containing compound metabolism; protoporphyrin-IX biosynthesis; coproporphyrinogen-III from 5-aminolevulinate: step 2/4. Functionally, tetrapolymerization of the monopyrrole PBG into the hydroxymethylbilane pre-uroporphyrinogen in several discrete steps. The sequence is that of Porphobilinogen deaminase (hemC) from Neisseria meningitidis serogroup A / serotype 4A (strain DSM 15465 / Z2491).